Here is a 223-residue protein sequence, read N- to C-terminus: GTP cyclohydrolase 1 (223 aa).

C114, H117, and C185 together coordinate Zn(2+).

Belongs to the GTP cyclohydrolase I family. As to quaternary structure, homomer.

The enzyme catalyses GTP + H2O = 7,8-dihydroneopterin 3'-triphosphate + formate + H(+). Its pathway is cofactor biosynthesis; 7,8-dihydroneopterin triphosphate biosynthesis; 7,8-dihydroneopterin triphosphate from GTP: step 1/1. This chain is GTP cyclohydrolase 1, found in Chlorobium chlorochromatii (strain CaD3).